A 473-amino-acid polypeptide reads, in one-letter code: MAPSLSTAVSSLLLLLLLAAAISVSSSPPMPEDSIRVISAEKRIDLTSPIVKVFLTLKLENDATAPEASQVLLAFTPTEVEHLAIVKATRAEGKRKKKIYVPLSVKASDLAAAPNGARLYSILLSTPLKPAEVTTLEVFYALTHSLEPFPAEITQSDPQLVYYRDSAVLLSPYHVLEQVTYIKMPSNRVESFTRVDPTSRAGNEVKYGAYNNQLPNSYVPILVHYENNRPFAVVEEFVRKVEISHWGNVQITEQYKLKHGGAQHKGVFSRLEYQSRPSISGVSSFKNLLARLPPRVHSVYYRDEIGNISSSHLRSDSHKSELEIEPRYPLFGGWHCTFTIGYGLPLQDFLFESDDGRRYINLTFGCPLLDTVVDDLTIKVVLPEGSTSPQAVVPFLMEQYLETSYSYLDVVGRTTVVLKKRNVVGEHNVPFQVYYEFNPIFMLAEPLMLISAVFLFFVACIAYLHMDLSIGKS.

Residues 1-27 (MAPSLSTAVSSLLLLLLLAAAISVSSS) form the signal peptide. The Lumenal segment spans residues 28-439 (PPMPEDSIRV…PFQVYYEFNP (412 aa)). N-linked (GlcNAc...) asparagine glycosylation is found at N307 and N361. The helical transmembrane segment at 440–460 (IFMLAEPLMLISAVFLFFVAC) threads the bilayer. At 461 to 473 (IAYLHMDLSIGKS) the chain is on the cytoplasmic side.

Belongs to the OST1 family. In terms of assembly, component of the oligosaccharyltransferase (OST) complex.

It is found in the endoplasmic reticulum membrane. Its pathway is protein modification; protein glycosylation. In terms of biological role, subunit of the oligosaccharyl transferase (OST) complex that catalyzes the initial transfer of a defined glycan (Glc(3)Man(9)GlcNAc(2) in eukaryotes) from the lipid carrier dolichol-pyrophosphate to an asparagine residue within an Asn-X-Ser/Thr consensus motif in nascent polypeptide chains, the first step in protein N-glycosylation. N-glycosylation occurs cotranslationally and the complex associates with the Sec61 complex at the channel-forming translocon complex that mediates protein translocation across the endoplasmic reticulum (ER). All subunits are required for a maximal enzyme activity. The sequence is that of Dolichyl-diphosphooligosaccharide--protein glycosyltransferase subunit 1B (OST1B) from Oryza sativa subsp. japonica (Rice).